Consider the following 340-residue polypeptide: 4-hydroxy-2-oxovalerate aldolase (340 aa).

One can recognise a Pyruvate carboxyltransferase domain in the interval 8 to 260; it reads VILHDMSLRD…SHGINLYDIM (253 aa). Residue 16–17 participates in substrate binding; sequence RD. Aspartate 17 provides a ligand contact to Mn(2+). The Proton acceptor role is filled by histidine 20. Positions 170 and 199 each coordinate substrate. Mn(2+) contacts are provided by histidine 199 and histidine 201. Tyrosine 290 is a binding site for substrate.

It belongs to the 4-hydroxy-2-oxovalerate aldolase family.

It carries out the reaction (S)-4-hydroxy-2-oxopentanoate = acetaldehyde + pyruvate. The polypeptide is 4-hydroxy-2-oxovalerate aldolase (Shewanella pealeana (strain ATCC 700345 / ANG-SQ1)).